Consider the following 649-residue polypeptide: Macrolide export ATP-binding/permease protein MacB 1 (649 aa).

The 239-residue stretch at 5 to 243 folds into the ABC transporter domain; it reads LELEGIRRSY…AAAELMSLTP (239 aa). 41–48 lines the ATP pocket; the sequence is GASGSGKS. 5 helical membrane passes run 274-294, 420-440, 524-544, 578-598, and 608-628; these read ALTMLGIIIGIASVVSILVVG, VVGQVILVGNMPATVVGVVAE, LFLTLVAVISLVVGGIGVMNI, VLVCLIGGALGISLSFAIGLI, and IAFPPMALFSAFLCSTVIGVV.

This sequence belongs to the ABC transporter superfamily. Macrolide exporter (TC 3.A.1.122) family. In terms of assembly, homodimer. Part of the tripartite efflux system MacAB-TolC, which is composed of an inner membrane transporter, MacB, a periplasmic membrane fusion protein, MacA, and an outer membrane component, TolC. The complex forms a large protein conduit and can translocate molecules across both the inner and outer membranes. Interacts with MacA.

It localises to the cell inner membrane. Functionally, part of the tripartite efflux system MacAB-TolC. MacB is a non-canonical ABC transporter that contains transmembrane domains (TMD), which form a pore in the inner membrane, and an ATP-binding domain (NBD), which is responsible for energy generation. Confers resistance against macrolides. The protein is Macrolide export ATP-binding/permease protein MacB 1 of Yersinia pestis bv. Antiqua (strain Antiqua).